We begin with the raw amino-acid sequence, 225 residues long: Enolase-phosphatase E1 (225 aa).

This sequence belongs to the HAD-like hydrolase superfamily. MasA/MtnC family. In terms of assembly, monomer. Requires Mg(2+) as cofactor.

It carries out the reaction 5-methylsulfanyl-2,3-dioxopentyl phosphate + H2O = 1,2-dihydroxy-5-(methylsulfanyl)pent-1-en-3-one + phosphate. It functions in the pathway amino-acid biosynthesis; L-methionine biosynthesis via salvage pathway; L-methionine from S-methyl-5-thio-alpha-D-ribose 1-phosphate: step 3/6. It participates in amino-acid biosynthesis; L-methionine biosynthesis via salvage pathway; L-methionine from S-methyl-5-thio-alpha-D-ribose 1-phosphate: step 4/6. Functionally, bifunctional enzyme that catalyzes the enolization of 2,3-diketo-5-methylthiopentyl-1-phosphate (DK-MTP-1-P) into the intermediate 2-hydroxy-3-keto-5-methylthiopentenyl-1-phosphate (HK-MTPenyl-1-P), which is then dephosphorylated to form the acireductone 1,2-dihydroxy-3-keto-5-methylthiopentene (DHK-MTPene). The polypeptide is Enolase-phosphatase E1 (Shewanella piezotolerans (strain WP3 / JCM 13877)).